Reading from the N-terminus, the 299-residue chain is Bifunctional protein FolD (299 aa).

NADP(+) is bound by residues 169–171, serine 194, and isoleucine 235; that span reads GRS.

This sequence belongs to the tetrahydrofolate dehydrogenase/cyclohydrolase family. In terms of assembly, homodimer.

It catalyses the reaction (6R)-5,10-methylene-5,6,7,8-tetrahydrofolate + NADP(+) = (6R)-5,10-methenyltetrahydrofolate + NADPH. The catalysed reaction is (6R)-5,10-methenyltetrahydrofolate + H2O = (6R)-10-formyltetrahydrofolate + H(+). Its pathway is one-carbon metabolism; tetrahydrofolate interconversion. In terms of biological role, catalyzes the oxidation of 5,10-methylenetetrahydrofolate to 5,10-methenyltetrahydrofolate and then the hydrolysis of 5,10-methenyltetrahydrofolate to 10-formyltetrahydrofolate. The polypeptide is Bifunctional protein FolD (Trichormus variabilis (strain ATCC 29413 / PCC 7937) (Anabaena variabilis)).